The chain runs to 119 residues: Large ribosomal subunit protein uL22 (119 aa).

The protein belongs to the universal ribosomal protein uL22 family. As to quaternary structure, part of the 50S ribosomal subunit.

Functionally, this protein binds specifically to 23S rRNA; its binding is stimulated by other ribosomal proteins, e.g. L4, L17, and L20. It is important during the early stages of 50S assembly. It makes multiple contacts with different domains of the 23S rRNA in the assembled 50S subunit and ribosome. In terms of biological role, the globular domain of the protein is located near the polypeptide exit tunnel on the outside of the subunit, while an extended beta-hairpin is found that lines the wall of the exit tunnel in the center of the 70S ribosome. The polypeptide is Large ribosomal subunit protein uL22 (Rickettsia canadensis (strain McKiel)).